A 115-amino-acid chain; its full sequence is Transmembrane protein 218 (115 aa).

3 helical membrane passes run 5–25 (VLGV…VLLL), 38–58 (FSIV…LLFP), and 81–101 (YVLL…LLTH).

This sequence belongs to the TMEM218 family. In terms of assembly, interacts with TMEM67.

It is found in the membrane. The protein resides in the cell projection. The protein localises to the cilium. Functionally, may be involved in ciliary biogenesis or function. This is Transmembrane protein 218 (Tmem218) from Mus musculus (Mouse).